The sequence spans 429 residues: Histidine--tRNA ligase (429 aa).

The protein belongs to the class-II aminoacyl-tRNA synthetase family. In terms of assembly, homodimer.

It is found in the cytoplasm. It catalyses the reaction tRNA(His) + L-histidine + ATP = L-histidyl-tRNA(His) + AMP + diphosphate + H(+). The chain is Histidine--tRNA ligase from Streptococcus pneumoniae (strain 70585).